Here is an 89-residue protein sequence, read N- to C-terminus: Small ribosomal subunit protein uS15 (89 aa).

It belongs to the universal ribosomal protein uS15 family. In terms of assembly, part of the 30S ribosomal subunit. Forms a bridge to the 50S subunit in the 70S ribosome, contacting the 23S rRNA.

Functionally, one of the primary rRNA binding proteins, it binds directly to 16S rRNA where it helps nucleate assembly of the platform of the 30S subunit by binding and bridging several RNA helices of the 16S rRNA. In terms of biological role, forms an intersubunit bridge (bridge B4) with the 23S rRNA of the 50S subunit in the ribosome. The chain is Small ribosomal subunit protein uS15 from Thermomicrobium roseum (strain ATCC 27502 / DSM 5159 / P-2).